Here is a 160-residue protein sequence, read N- to C-terminus: Transcription antitermination protein NusB (160 aa).

It belongs to the NusB family.

Its function is as follows. Involved in transcription antitermination. Required for transcription of ribosomal RNA (rRNA) genes. Binds specifically to the boxA antiterminator sequence of the ribosomal RNA (rrn) operons. This Rhizobium leguminosarum bv. trifolii (strain WSM2304) protein is Transcription antitermination protein NusB.